The sequence spans 353 residues: RNA 3'-terminal phosphate cyclase (353 aa).

ATP is bound by residues glutamine 103 and 297-301 (HLADQ). The active-site Tele-AMP-histidine intermediate is the histidine 322.

The protein belongs to the RNA 3'-terminal cyclase family. Type 1 subfamily.

The protein localises to the cytoplasm. It carries out the reaction a 3'-end 3'-phospho-ribonucleotide-RNA + ATP = a 3'-end 2',3'-cyclophospho-ribonucleotide-RNA + AMP + diphosphate. Its function is as follows. Catalyzes the conversion of 3'-phosphate to a 2',3'-cyclic phosphodiester at the end of RNA. The mechanism of action of the enzyme occurs in 3 steps: (A) adenylation of the enzyme by ATP; (B) transfer of adenylate to an RNA-N3'P to produce RNA-N3'PP5'A; (C) and attack of the adjacent 2'-hydroxyl on the 3'-phosphorus in the diester linkage to produce the cyclic end product. The biological role of this enzyme is unknown but it is likely to function in some aspects of cellular RNA processing. The protein is RNA 3'-terminal phosphate cyclase of Salmonella heidelberg (strain SL476).